Reading from the N-terminus, the 884-residue chain is Schlafen family member 5 (884 aa).

574-581 (GLPGSGKT) lines the ATP pocket.

This sequence belongs to the Schlafen family. Subgroup III subfamily.

Functionally, may have a role in hematopoietic cell differentiation. The protein is Schlafen family member 5 (Slfn5) of Mus musculus (Mouse).